A 376-amino-acid chain; its full sequence is Polygalacturonase (376 aa).

The signal sequence occupies residues 1-20 (MASSLKLGLIALLGATAVNA). The cysteines at positions 39 and 57 are disulfide-linked. The PbH1 1 repeat unit spans residues 170–208 (AKELTLSGITVDTADGDSNGGHNTDAFDVGSSNGVYITS). Asp215 functions as the Proton donor in the catalytic mechanism. A disulfide bond links Cys217 and Cys233. PbH1 repeat units follow at residues 223–243 (GTNV…SIGS), 252–273 (VDGV…RIKT), 281–303 (VQGV…VIEQ), and 315–360 (TSGV…SITG). His237 is a catalytic residue. 2 disulfides stabilise this stretch: Cys343–Cys348 and Cys367–Cys376.

Belongs to the glycosyl hydrolase 28 family.

It localises to the secreted. It catalyses the reaction (1,4-alpha-D-galacturonosyl)n+m + H2O = (1,4-alpha-D-galacturonosyl)n + (1,4-alpha-D-galacturonosyl)m.. This is Polygalacturonase (PGG1) from Penicillium griseoroseum.